Here is a 406-residue protein sequence, read N- to C-terminus: Glycosyltransferase GlyE (406 aa).

The tract at residues 3–265 (NTKRAVVFAG…SVILNEWFSK (263 aa)) is GT8 domain. UDP is bound by residues 11 to 16 (AGDYAY) and 106 to 107 (DS). The Mn(2+) site is built by D106, D108, and H227. 227–233 (HYISQDK) is a UDP binding site.

In the N-terminal section; belongs to the glycosyltransferase 8 family. Requires Mn(2+) as cofactor.

It participates in protein modification; protein glycosylation. Its function is as follows. Involved in the polymorphic O-glycosylation of the serine-rich repeat protein PsrP. Catalyzes the third step in glycosylation of PsrP in this bacteria. Transfers galactose from UDP-galactose to the terminal glucose moiety of already-glycosylated PsrP (using the short substrate PsrP-GlcNAc-Glc). Has a very marked preference for PsrP substrate that has already been modified by GlcNAc and glucose. Has hydrolytic activity against UDP-galactose but none against UDP-glucose. In terms of biological role, also catalyzes the fourth step in glycosylation of PsrP in this bacteria. Can transfer the sugar from UDP-galactose to the terminal sugar moiety of PsrP-GlcNAc-Glc-Glc and of PsrP-GlcNAc-Glc-Gal. The protein is Glycosyltransferase GlyE of Streptococcus pneumoniae serotype 4 (strain ATCC BAA-334 / TIGR4).